The primary structure comprises 637 residues: Acyl-CoA ligase cm3C (637 aa).

Residues 282-290, 423-428, Asp-507, Arg-526, and Lys-624 contribute to the ATP site; these read TSGTSGRQK and HAWGLT. Positions 353-423 are SBD1; sequence DMQRMLGSVA…SLQPSWEFLH (71 aa). The SBD2 stretch occupies residues 424–486; sequence AWGLTETCIV…YKAPNMFVGY (63 aa).

The protein belongs to the ATP-dependent AMP-binding enzyme family.

The protein operates within secondary metabolite biosynthesis. Functionally, acyl-CoA ligase; part of the gene cluster that mediates the biosynthesis of beauveriolides I and III, cyclodepsipeptides acting as inhibitors of the acyl-CoA:cholesterol acyltransferase. The HR-PKS cm3B initiates the biosynthesis of beauveriolides by iteratively catalyzing the formation of the linear polyketide chain. The ATP-dependent acetyl-CoA ligase cm3D converts the polyketide carboxylic acid to a CoA thioester which id shuttled to the first T domain in the NRPS cm3A by the acetyltransferase cm3C. Cm3A contains 13 domains and assembles the polyketide chain, L-phenylalanine, L-alanine, and D-leucine (or D-allo-isoleucine) to form beauveriolide I (or beauveriolide III). The production of both beauveriolides I and III suggests the substrate adaptability of cm3B, using different amino acids as substrates. This chain is Acyl-CoA ligase cm3C, found in Cordyceps militaris (strain CM01) (Caterpillar fungus).